A 946-amino-acid chain; its full sequence is Sorting nexin-14 (946 aa).

2 helical membrane passes run 24 to 44 (ICRQ…ASLL) and 49 to 69 (IHIL…YCSL). The PXA domain maps to 130-304 (SSKVDASLSE…LLIIFIDDSP (175 aa)). The RGS domain maps to 336-468 (ELKQIREQQD…CHSDEYFRQL (133 aa)). The residue at position 548 (serine 548) is a Phosphoserine. One can recognise a PX domain in the interval 570–690 (PYVDFFEDPS…DFLSPNGGET (121 aa)).

The protein belongs to the sorting nexin family. Widely expressed both in fetal and adult tissues.

Its subcellular location is the lysosome membrane. It is found in the late endosome membrane. The protein resides in the cell projection. The protein localises to the dendrite. Plays a role in maintaining normal neuronal excitability and synaptic transmission. May be involved in several stages of intracellular trafficking. Required for autophagosome clearance, possibly by mediating the fusion of lysosomes with autophagosomes. Binds phosphatidylinositol 3,5-bisphosphate (PtdIns(3,5)P2), a key component of late endosomes/lysosomes. Does not bind phosphatidylinositol 3-phosphate (PtdIns(3P)). This is Sorting nexin-14 (SNX14) from Homo sapiens (Human).